The following is a 496-amino-acid chain: ATP-dependent protease ATPase subunit HslU2 (496 aa).

A mitochondrion-targeting transit peptide spans Met-1–Cys-10. ATP is bound by residues Val-51 and Gly-94–Glu-99. Positions Gly-177–Ser-191 are enriched in low complexity. The interval Gly-177–Asn-204 is disordered. ATP is bound by residues Asp-308, Glu-374, and Arg-446.

Belongs to the ClpX chaperone family. HslU subfamily. In terms of assembly, a double ring-shaped homohexamer of HslV is capped on each side by a ring-shaped HslU homohexamer. The assembly of the HslU/HslV complex (HslVU) is dependent on binding of ATP.

The protein resides in the mitochondrion matrix. It is found in the kinetoplast. In terms of biological role, ATPase subunit of a proteasome-like degradation complex; this subunit has chaperone activity. The binding of ATP and its subsequent hydrolysis by HslU are essential for unfolding of protein substrates subsequently hydrolyzed by HslV. HslU recognizes the N-terminal part of its protein substrates and unfolds these before they are guided to HslV for hydrolysis. The HslVU protease complex functions in mitochondrial DNA replication by regulating DNA helicase PIF2 protein levels. This Trypanosoma brucei brucei (strain 927/4 GUTat10.1) protein is ATP-dependent protease ATPase subunit HslU2 (HslU2).